The primary structure comprises 832 residues: Protein P (832 aa).

Residues 1 to 177 are terminal protein domain (TP); that stretch reads MPLSYQHFRK…FCGSPYSWEQ (177 aa). Residues 178-335 form a spacer region; it reads ELQHGAESFH…YCLSHLVSLL (158 aa). Residues 336 to 679 form a polymerase/reverse transcriptase domain (RT) region; the sequence is DDWGPCTEHG…YSTLYPVARQ (344 aa). The Reverse transcriptase domain occupies 346-589; sequence EHHIRIPRTP…YSLHFMGYVI (244 aa). Residues aspartate 418, aspartate 540, and aspartate 541 each coordinate Mg(2+).

This sequence belongs to the hepadnaviridae P protein family.

It carries out the reaction DNA(n) + a 2'-deoxyribonucleoside 5'-triphosphate = DNA(n+1) + diphosphate. The catalysed reaction is Endonucleolytic cleavage to 5'-phosphomonoester.. Activated by host HSP70 and HSP40 in vitro to be able to bind the epsilon loop of the pgRNA. Because deletion of the RNase H region renders the protein partly chaperone-independent, the chaperones may be needed indirectly to relieve occlusion of the RNA-binding site by this domain. Inhibited by several reverse-transcriptase inhibitors: Lamivudine, Adefovir and Entecavir. Multifunctional enzyme that converts the viral RNA genome into dsDNA in viral cytoplasmic capsids. This enzyme displays a DNA polymerase activity that can copy either DNA or RNA templates, and a ribonuclease H (RNase H) activity that cleaves the RNA strand of RNA-DNA heteroduplexes in a partially processive 3'- to 5'-endonucleasic mode. Neo-synthesized pregenomic RNA (pgRNA) are encapsidated together with the P protein, and reverse-transcribed inside the nucleocapsid. Initiation of reverse-transcription occurs first by binding the epsilon loop on the pgRNA genome, and is initiated by protein priming, thereby the 5'-end of (-)DNA is covalently linked to P protein. Partial (+)DNA is synthesized from the (-)DNA template and generates the relaxed circular DNA (RC-DNA) genome. After budding and infection, the RC-DNA migrates in the nucleus, and is converted into a plasmid-like covalently closed circular DNA (cccDNA). The activity of P protein does not seem to be necessary for cccDNA generation, and is presumably released from (+)DNA by host nuclear DNA repair machinery. This chain is Protein P, found in Pan troglodytes (Chimpanzee).